The primary structure comprises 1119 residues: DNA-directed RNA polymerase subunit beta (1119 aa).

The protein belongs to the RNA polymerase beta chain family. In terms of assembly, the RNAP catalytic core consists of 2 alpha, 1 beta, 1 beta' and 1 omega subunit. When a sigma factor is associated with the core the holoenzyme is formed, which can initiate transcription.

It catalyses the reaction RNA(n) + a ribonucleoside 5'-triphosphate = RNA(n+1) + diphosphate. Functionally, DNA-dependent RNA polymerase catalyzes the transcription of DNA into RNA using the four ribonucleoside triphosphates as substrates. This is DNA-directed RNA polymerase subunit beta from Thermus thermophilus (strain ATCC 27634 / DSM 579 / HB8).